Here is a 495-residue protein sequence, read N- to C-terminus: Putative aldehyde dehydrogenase DhaS (495 aa).

244–249 is an NAD(+) binding site; sequence GSTEIG. Residues glutamate 266 and cysteine 300 contribute to the active site.

It belongs to the aldehyde dehydrogenase family.

The catalysed reaction is an aldehyde + NAD(+) + H2O = a carboxylate + NADH + 2 H(+). The protein is Putative aldehyde dehydrogenase DhaS (dhaS) of Bacillus subtilis (strain 168).